A 174-amino-acid polypeptide reads, in one-letter code: Large ribosomal subunit protein uL10 (174 aa).

This sequence belongs to the universal ribosomal protein uL10 family. In terms of assembly, part of the ribosomal stalk of the 50S ribosomal subunit. The N-terminus interacts with L11 and the large rRNA to form the base of the stalk. The C-terminus forms an elongated spine to which L12 dimers bind in a sequential fashion forming a multimeric L10(L12)X complex.

Its function is as follows. Forms part of the ribosomal stalk, playing a central role in the interaction of the ribosome with GTP-bound translation factors. The polypeptide is Large ribosomal subunit protein uL10 (Vesicomyosocius okutanii subsp. Calyptogena okutanii (strain HA)).